Here is a 131-residue protein sequence, read N- to C-terminus: UPF0102 protein YraN (131 aa).

Positions 1 to 19 (MATVPTRSGSPRQLTTKQT) are enriched in polar residues. Residues 1–20 (MATVPTRSGSPRQLTTKQTG) are disordered.

The protein belongs to the UPF0102 family.

The sequence is that of UPF0102 protein YraN from Escherichia coli (strain 55989 / EAEC).